Here is a 401-residue protein sequence, read N- to C-terminus: MANGLKGIKTVRDFELAGKVVFLRLDLNVPMENGKITDENRITASLPTIKYCMEQGAKLVMASHLGRPKTKDDTEFSLEPVAKRLQDLLNAEVILVEEPDSDAPKHLLPSLKPHQLILLENVRFEEGETKDSVEFAQKIANYSDIYINDAFGASHRAHATIHALPSVMKDKGIGFLIEKEITMLDSLLQNPKRPYIAVMGGAKVSDKIAVIERLMDVVDGFIVGGAMAYTFLKAQGLPVGKSLVENDKLKYAKEMIERIEARNKTILLPVDHVATKGITDTAHAHVTNDVAIAEDELGVDIGPKSIKNFSAALREAGTIFWNGPMGIFENPAFAKGTFGVAQAIADSEAIKIVGGGDSAAAAEASGFAGKMTHISTGGGASLEYLQGDKLPGLEILRTRIR.

Substrate contacts are provided by residues 26 to 28 (DLN), Arg41, 64 to 67 (HLGR), Arg123, and Arg156. ATP is bound by residues Lys207, Gly298, Glu329, and 355 to 358 (GGDS).

Belongs to the phosphoglycerate kinase family. Monomer.

The protein resides in the cytoplasm. It catalyses the reaction (2R)-3-phosphoglycerate + ATP = (2R)-3-phospho-glyceroyl phosphate + ADP. Its pathway is carbohydrate degradation; glycolysis; pyruvate from D-glyceraldehyde 3-phosphate: step 2/5. This is Phosphoglycerate kinase from Bdellovibrio bacteriovorus (strain ATCC 15356 / DSM 50701 / NCIMB 9529 / HD100).